The primary structure comprises 345 residues: NADPH dehydrogenase (345 aa).

Residue 23–26 participates in FMN binding; the sequence is SPMC. Substrate is bound at residue Y28. 2 residues coordinate FMN: A60 and Q102. 164-167 contributes to the substrate binding site; sequence HGAH. Residues R215 and 307–308 each bind FMN; that span reads GR.

It belongs to the NADH:flavin oxidoreductase/NADH oxidase family. NamA subfamily. In terms of assembly, homotetramer. FMN is required as a cofactor.

It catalyses the reaction A + NADPH + H(+) = AH2 + NADP(+). Functionally, catalyzes the reduction of the double bond of an array of alpha,beta-unsaturated aldehydes and ketones. It also reduces the nitro group of nitroester and nitroaromatic compounds. It could have a role in detoxification processes. This is NADPH dehydrogenase from Bacillus thuringiensis (strain Al Hakam).